The sequence spans 280 residues: Polyamine aminopropyltransferase (280 aa).

The PABS domain occupies 3 to 237 (DVYFMERDPY…YWWSFSVGSK (235 aa)). Gln-33 contributes to the S-methyl-5'-thioadenosine binding site. Residues His-64 and Asp-88 each coordinate spermidine. Residues Asp-108 and 139–140 (DG) contribute to the S-methyl-5'-thioadenosine site. Asp-157 acts as the Proton acceptor in catalysis. 157 to 160 (DSTD) serves as a coordination point for spermidine.

It belongs to the spermidine/spermine synthase family. As to quaternary structure, homodimer or homotetramer.

The protein resides in the cytoplasm. It carries out the reaction S-adenosyl 3-(methylsulfanyl)propylamine + putrescine = S-methyl-5'-thioadenosine + spermidine + H(+). It participates in amine and polyamine biosynthesis; spermidine biosynthesis; spermidine from putrescine: step 1/1. Functionally, catalyzes the irreversible transfer of a propylamine group from the amino donor S-adenosylmethioninamine (decarboxy-AdoMet) to putrescine (1,4-diaminobutane) to yield spermidine. The polypeptide is Polyamine aminopropyltransferase (Hydrogenobaculum sp. (strain Y04AAS1)).